Here is a 350-residue protein sequence, read N- to C-terminus: Transmembrane protein 185B (350 aa).

A run of 7 helical transmembrane segments spans residues 16–36, 41–61, 81–101, 111–131, 168–188, 211–231, and 240–260; these read LIYT…DGII, WAVF…ASVG, FKAM…EVLV, FWLL…AACV, WLVV…VVLY, VTMA…EVLL, and TFSY…LMAT.

Belongs to the TMEM185 family.

It is found in the membrane. The chain is Transmembrane protein 185B (TMEM185B) from Homo sapiens (Human).